A 330-amino-acid chain; its full sequence is DNA-directed RNA polymerase subunit alpha (330 aa).

An alpha N-terminal domain (alpha-NTD) region spans residues 1–235 (MVREKVKVST…DLFIHFLHAK (235 aa)). An alpha C-terminal domain (alpha-CTD) region spans residues 270–330 (IALKYIFIDQ…KQILGILEKK (61 aa)).

Belongs to the RNA polymerase alpha chain family. In terms of assembly, in plastids the minimal PEP RNA polymerase catalytic core is composed of four subunits: alpha, beta, beta', and beta''. When a (nuclear-encoded) sigma factor is associated with the core the holoenzyme is formed, which can initiate transcription.

It localises to the plastid. The protein localises to the chloroplast. It carries out the reaction RNA(n) + a ribonucleoside 5'-triphosphate = RNA(n+1) + diphosphate. Its function is as follows. DNA-dependent RNA polymerase catalyzes the transcription of DNA into RNA using the four ribonucleoside triphosphates as substrates. The sequence is that of DNA-directed RNA polymerase subunit alpha (rpoA) from Gossypium barbadense (Sea Island cotton).